The sequence spans 162 residues: uncharacterized protein (162 aa).

A helical membrane pass occupies residues 6–24; that stretch reads SYLISIFYIILITSETTAF.

The protein resides in the membrane. This is an uncharacterized protein from Caenorhabditis elegans.